The primary structure comprises 113 residues: Small ribosomal subunit protein eS24 (113 aa).

Belongs to the eukaryotic ribosomal protein eS24 family.

This chain is Small ribosomal subunit protein eS24, found in Metallosphaera sedula (strain ATCC 51363 / DSM 5348 / JCM 9185 / NBRC 15509 / TH2).